Reading from the N-terminus, the 561-residue chain is CWF19-like protein mug161 (561 aa).

Residues 286–338 (QQTNKFHKSKSSTALFKSKKDSSSSLNKMHKSESHSALNNLHKSESGTSLNNR) form a disordered region. Ser296 is modified (phosphoserine). A Phosphothreonine modification is found at Thr298. Ser317, Ser319, Ser331, and Ser334 each carry phosphoserine. The span at 320 to 337 (HSALNNLHKSESGTSLNN) shows a compositional bias: polar residues.

The protein belongs to the CWF19 family.

It is found in the nucleus. Its function is as follows. Has a role in meiosis. In Schizosaccharomyces pombe (strain 972 / ATCC 24843) (Fission yeast), this protein is CWF19-like protein mug161 (mug161).